The sequence spans 480 residues: uncharacterized protein (480 aa).

This is an uncharacterized protein from Xylella fastidiosa (strain 9a5c).